We begin with the raw amino-acid sequence, 165 residues long: Cytochrome c-type biogenesis protein CcmE (165 aa).

At M1–R7 the chain is on the cytoplasmic side. The chain crosses the membrane as a helical; Signal-anchor for type II membrane protein span at residues L8–A28. Topologically, residues F29–R165 are periplasmic. 2 residues coordinate heme: H124 and Y128. Positions Q144–G154 are enriched in low complexity. The disordered stretch occupies residues Q144–R165.

This sequence belongs to the CcmE/CycJ family.

It is found in the cell inner membrane. Its function is as follows. Heme chaperone required for the biogenesis of c-type cytochromes. Transiently binds heme delivered by CcmC and transfers the heme to apo-cytochromes in a process facilitated by CcmF and CcmH. The sequence is that of Cytochrome c-type biogenesis protein CcmE from Rhizobium etli (strain CIAT 652).